A 283-amino-acid polypeptide reads, in one-letter code: Phosphatidylglycerol--prolipoprotein diacylglyceryl transferase (283 aa).

4 consecutive transmembrane segments (helical) span residues 19-39, 59-79, 90-110, and 120-140; these read IGPI…LIGV, LSIW…VLFQ, IIAI…GTLA, and VPFW…QAIG. An a 1,2-diacyl-sn-glycero-3-phospho-(1'-sn-glycerol)-binding site is contributed by R141. 3 helical membrane-spanning segments follow: residues 181–201, 212–232, and 245–265; these read TFLY…TLFF, VGTL…WIEG, and IAQV…AWLY.

The protein belongs to the Lgt family.

Its subcellular location is the cell inner membrane. The enzyme catalyses L-cysteinyl-[prolipoprotein] + a 1,2-diacyl-sn-glycero-3-phospho-(1'-sn-glycerol) = an S-1,2-diacyl-sn-glyceryl-L-cysteinyl-[prolipoprotein] + sn-glycerol 1-phosphate + H(+). It functions in the pathway protein modification; lipoprotein biosynthesis (diacylglyceryl transfer). In terms of biological role, catalyzes the transfer of the diacylglyceryl group from phosphatidylglycerol to the sulfhydryl group of the N-terminal cysteine of a prolipoprotein, the first step in the formation of mature lipoproteins. The protein is Phosphatidylglycerol--prolipoprotein diacylglyceryl transferase of Nostoc sp. (strain PCC 7120 / SAG 25.82 / UTEX 2576).